Consider the following 118-residue polypeptide: Endoribonuclease MazF9 (118 aa).

The protein belongs to the PemK/MazF family. As to quaternary structure, forms a complex with cognate antitoxin MazE9.

Functionally, toxic component of a type II toxin-antitoxin (TA) system. Upon expression in E.coli and M.smegmatis inhibits cell growth and colony formation. Its toxic effect is neutralized by coexpression with cognate antitoxin MazE9. Acts as an mRNA interferase, specifically cleaving between U and C in UAC sequences. May cleave its cognate antitoxin's gene. In E.coli expression with non-cognate antitoxins VapB27 and VapB40 partially neutralizes the toxin. The chain is Endoribonuclease MazF9 (mazF9) from Mycobacterium tuberculosis (strain ATCC 25618 / H37Rv).